The chain runs to 184 residues: ATP synthase subunit b, chloroplastic (184 aa).

The chain crosses the membrane as a helical span at residues 27–49 (LATNPINLSVVLGVLIFFGKGVL).

This sequence belongs to the ATPase B chain family. F-type ATPases have 2 components, F(1) - the catalytic core - and F(0) - the membrane proton channel. F(1) has five subunits: alpha(3), beta(3), gamma(1), delta(1), epsilon(1). F(0) has four main subunits: a(1), b(1), b'(1) and c(10-14). The alpha and beta chains form an alternating ring which encloses part of the gamma chain. F(1) is attached to F(0) by a central stalk formed by the gamma and epsilon chains, while a peripheral stalk is formed by the delta, b and b' chains.

Its subcellular location is the plastid. The protein localises to the chloroplast thylakoid membrane. Its function is as follows. F(1)F(0) ATP synthase produces ATP from ADP in the presence of a proton or sodium gradient. F-type ATPases consist of two structural domains, F(1) containing the extramembraneous catalytic core and F(0) containing the membrane proton channel, linked together by a central stalk and a peripheral stalk. During catalysis, ATP synthesis in the catalytic domain of F(1) is coupled via a rotary mechanism of the central stalk subunits to proton translocation. Component of the F(0) channel, it forms part of the peripheral stalk, linking F(1) to F(0). This chain is ATP synthase subunit b, chloroplastic, found in Cucumis sativus (Cucumber).